We begin with the raw amino-acid sequence, 187 residues long: tRNA (mnm(5)s(2)U34)-methyltransferase (187 aa).

N31, N33, D51, Q53, H77, and E78 together coordinate S-adenosyl-L-methionine.

Belongs to the methyltransferase superfamily. MnmM family. In terms of assembly, homodimer.

It carries out the reaction 5-aminomethyl-2-thiouridine(34) in tRNA + S-adenosyl-L-methionine = 5-methylaminomethyl-2-thiouridine(34) in tRNA + S-adenosyl-L-homocysteine + H(+). Its pathway is tRNA modification. Involved in the biosynthesis of 5-methylaminomethyl-2-thiouridine (mnm(5)s(2)U) at the wobble position (U34) in tRNA. Catalyzes the transfer of a methyl group from S-adenosyl-L-methionine to nm(5)s(2)U34 to form mnm(5)s(2)U34. This Staphylococcus aureus (strain NCTC 8325 / PS 47) protein is tRNA (mnm(5)s(2)U34)-methyltransferase.